The chain runs to 118 residues: Small ribosomal subunit protein uS13 (118 aa).

Residues 94-118 (NLPVRGQNTKNNARTRKGPIRSIKR) form a disordered region. A compositionally biased stretch (basic residues) spans 106 to 118 (ARTRKGPIRSIKR).

It belongs to the universal ribosomal protein uS13 family. Part of the 30S ribosomal subunit. Forms a loose heterodimer with protein S19. Forms two bridges to the 50S subunit in the 70S ribosome.

Its function is as follows. Located at the top of the head of the 30S subunit, it contacts several helices of the 16S rRNA. In the 70S ribosome it contacts the 23S rRNA (bridge B1a) and protein L5 of the 50S subunit (bridge B1b), connecting the 2 subunits; these bridges are implicated in subunit movement. Contacts the tRNAs in the A and P-sites. This chain is Small ribosomal subunit protein uS13, found in Psychrobacter sp. (strain PRwf-1).